We begin with the raw amino-acid sequence, 337 residues long: UDP-3-O-acylglucosamine N-acyltransferase (337 aa).

Residue histidine 238 is the Proton acceptor of the active site.

Belongs to the transferase hexapeptide repeat family. LpxD subfamily. Homotrimer.

The enzyme catalyses a UDP-3-O-[(3R)-3-hydroxyacyl]-alpha-D-glucosamine + a (3R)-hydroxyacyl-[ACP] = a UDP-2-N,3-O-bis[(3R)-3-hydroxyacyl]-alpha-D-glucosamine + holo-[ACP] + H(+). It participates in bacterial outer membrane biogenesis; LPS lipid A biosynthesis. Functionally, catalyzes the N-acylation of UDP-3-O-acylglucosamine using 3-hydroxyacyl-ACP as the acyl donor. Is involved in the biosynthesis of lipid A, a phosphorylated glycolipid that anchors the lipopolysaccharide to the outer membrane of the cell. In Xanthomonas axonopodis pv. citri (strain 306), this protein is UDP-3-O-acylglucosamine N-acyltransferase.